A 55-amino-acid polypeptide reads, in one-letter code: Large ribosomal subunit protein bL33 (55 aa).

In terms of processing, the protein is methylated on either Ala-2 or Lys-3.

This Rhodopseudomonas palustris (strain ATCC BAA-98 / CGA009) protein is Large ribosomal subunit protein bL33.